The sequence spans 127 residues: Fluoride-specific ion channel FluC (127 aa).

A run of 4 helical transmembrane segments spans residues 4 to 24 (LLLAVFIGGGTGSVARWLLSM), 35 to 55 (LGTLTANLIGAFIIGIGFAWF), 71 to 91 (TGFCGGLTTFSTFSAEVVFLL), and 103 to 123 (VFVNLLGSFAMTALAFWLFSA). 2 residues coordinate Na(+): Gly75 and Thr78.

This sequence belongs to the fluoride channel Fluc/FEX (TC 1.A.43) family.

The protein localises to the cell inner membrane. It carries out the reaction fluoride(in) = fluoride(out). Na(+) is not transported, but it plays an essential structural role and its presence is essential for fluoride channel function. Its function is as follows. Fluoride-specific ion channel. Important for reducing fluoride concentration in the cell, thus reducing its toxicity. This Escherichia coli (strain K12 / MC4100 / BW2952) protein is Fluoride-specific ion channel FluC.